The sequence spans 158 residues: SsrA-binding protein (158 aa).

It belongs to the SmpB family.

The protein resides in the cytoplasm. Functionally, required for rescue of stalled ribosomes mediated by trans-translation. Binds to transfer-messenger RNA (tmRNA), required for stable association of tmRNA with ribosomes. tmRNA and SmpB together mimic tRNA shape, replacing the anticodon stem-loop with SmpB. tmRNA is encoded by the ssrA gene; the 2 termini fold to resemble tRNA(Ala) and it encodes a 'tag peptide', a short internal open reading frame. During trans-translation Ala-aminoacylated tmRNA acts like a tRNA, entering the A-site of stalled ribosomes, displacing the stalled mRNA. The ribosome then switches to translate the ORF on the tmRNA; the nascent peptide is terminated with the 'tag peptide' encoded by the tmRNA and targeted for degradation. The ribosome is freed to recommence translation, which seems to be the essential function of trans-translation. This Acinetobacter baumannii (strain AB307-0294) protein is SsrA-binding protein.